The chain runs to 387 residues: Succinate--CoA ligase [ADP-forming] subunit beta (387 aa).

Residues 9 to 244 (KQLFASYGLP…VSQEDDRENR (236 aa)) form the ATP-grasp domain. ATP-binding positions include lysine 46, 53–55 (GRG), glutamate 99, cysteine 102, and glutamate 107. 2 residues coordinate Mg(2+): asparagine 199 and aspartate 213. Substrate contacts are provided by residues asparagine 264 and 321–323 (GIV).

The protein belongs to the succinate/malate CoA ligase beta subunit family. As to quaternary structure, heterotetramer of two alpha and two beta subunits. Mg(2+) is required as a cofactor.

The catalysed reaction is succinate + ATP + CoA = succinyl-CoA + ADP + phosphate. It carries out the reaction GTP + succinate + CoA = succinyl-CoA + GDP + phosphate. It participates in carbohydrate metabolism; tricarboxylic acid cycle; succinate from succinyl-CoA (ligase route): step 1/1. In terms of biological role, succinyl-CoA synthetase functions in the citric acid cycle (TCA), coupling the hydrolysis of succinyl-CoA to the synthesis of either ATP or GTP and thus represents the only step of substrate-level phosphorylation in the TCA. The beta subunit provides nucleotide specificity of the enzyme and binds the substrate succinate, while the binding sites for coenzyme A and phosphate are found in the alpha subunit. The sequence is that of Succinate--CoA ligase [ADP-forming] subunit beta from Legionella pneumophila (strain Paris).